A 442-amino-acid polypeptide reads, in one-letter code: GTPase Der (442 aa).

2 consecutive EngA-type G domains span residues 3 to 167 (PTIV…PPDV) and 177 to 350 (PRIA…AAAM). GTP contacts are provided by residues 9–16 (GRPNVGKS), 56–60 (DTAGF), 119–122 (NKSE), 183–190 (GRPNVGKS), 230–234 (DTAGL), and 295–298 (NKWD). The KH-like domain maps to 351 to 435 (VNLSTPRLTR…PLRIQFRTAH (85 aa)).

The protein belongs to the TRAFAC class TrmE-Era-EngA-EngB-Septin-like GTPase superfamily. EngA (Der) GTPase family. As to quaternary structure, associates with the 50S ribosomal subunit.

GTPase that plays an essential role in the late steps of ribosome biogenesis. This is GTPase Der from Aromatoleum aromaticum (strain DSM 19018 / LMG 30748 / EbN1) (Azoarcus sp. (strain EbN1)).